The chain runs to 505 residues: L-arabinose isomerase (505 aa).

Mn(2+) contacts are provided by glutamate 310, glutamate 337, histidine 354, and histidine 453.

The protein belongs to the arabinose isomerase family. Requires Mn(2+) as cofactor.

The enzyme catalyses beta-L-arabinopyranose = L-ribulose. The protein operates within carbohydrate degradation; L-arabinose degradation via L-ribulose; D-xylulose 5-phosphate from L-arabinose (bacterial route): step 1/3. In terms of biological role, catalyzes the conversion of L-arabinose to L-ribulose. The protein is L-arabinose isomerase of Clavibacter sepedonicus (Clavibacter michiganensis subsp. sepedonicus).